The sequence spans 176 residues: Protein MOTHER of FT and TFL1 homolog 1 (176 aa).

Belongs to the phosphatidylethanolamine-binding protein family.

Its function is as follows. May form complexes with phosphorylated ligands by interfering with kinases and their effectors. The sequence is that of Protein MOTHER of FT and TFL1 homolog 1 from Oryza sativa subsp. japonica (Rice).